A 257-amino-acid polypeptide reads, in one-letter code: Acetyl-coenzyme A carboxylase carboxyl transferase subunit beta 1 (257 aa).

The CoA carboxyltransferase N-terminal domain occupies 1-257; that stretch reads MNINDIFLKR…KMHVNTGGEA (257 aa).

It belongs to the AccD/PCCB family. Acetyl-CoA carboxylase is a heterohexamer composed of biotin carboxyl carrier protein (AccB), biotin carboxylase (AccC) and two subunits each of ACCase subunit alpha (AccA) and ACCase subunit beta (AccD).

Its subcellular location is the cytoplasm. The enzyme catalyses N(6)-carboxybiotinyl-L-lysyl-[protein] + acetyl-CoA = N(6)-biotinyl-L-lysyl-[protein] + malonyl-CoA. Its pathway is lipid metabolism; malonyl-CoA biosynthesis; malonyl-CoA from acetyl-CoA: step 1/1. Its function is as follows. Component of the acetyl coenzyme A carboxylase (ACC) complex. Biotin carboxylase (BC) catalyzes the carboxylation of biotin on its carrier protein (BCCP) and then the CO(2) group is transferred by the transcarboxylase to acetyl-CoA to form malonyl-CoA. The sequence is that of Acetyl-coenzyme A carboxylase carboxyl transferase subunit beta 1 from Lachnospira eligens (strain ATCC 27750 / DSM 3376 / VPI C15-48 / C15-B4) (Eubacterium eligens).